The primary structure comprises 1392 residues: L-2-aminoadipate reductase (1392 aa).

A Glycyl lysine isopeptide (Lys-Gly) (interchain with G-Cter in ubiquitin) cross-link involves residue Lys541. In terms of domain architecture, Carrier spans 843 to 920; sequence SQFTNVEREV…AFAAEIDRIK (78 aa). Residue Ser880 is modified to O-(pantetheine 4'-phosphoryl)serine. A Glycyl lysine isopeptide (Lys-Gly) (interchain with G-Cter in ubiquitin) cross-link involves residue Lys1276.

This sequence belongs to the ATP-dependent AMP-binding enzyme family. The cofactor is pantetheine 4'-phosphate.

The catalysed reaction is (S)-2-amino-6-oxohexanoate + NADP(+) + H2O = L-2-aminoadipate + NADPH + 2 H(+). It catalyses the reaction (S)-2-amino-6-oxohexanoate + NAD(+) + H2O = L-2-aminoadipate + NADH + 2 H(+). It carries out the reaction (S)-2-amino-6-oxohexanoate + AMP + diphosphate + NADP(+) = L-2-aminoadipate + ATP + NADPH + H(+). Its pathway is amino-acid biosynthesis; L-lysine biosynthesis via AAA pathway; L-lysine from L-alpha-aminoadipate (fungal route): step 1/3. Catalyzes the activation of alpha-aminoadipate by ATP-dependent adenylation and the reduction of activated alpha-aminoadipate by NADPH. The activated alpha-aminoadipate is bound to the phosphopantheinyl group of the enzyme itself before it is reduced to (S)-2-amino-6-oxohexanoate. This is L-2-aminoadipate reductase (LYS2) from Saccharomyces cerevisiae (strain ATCC 204508 / S288c) (Baker's yeast).